We begin with the raw amino-acid sequence, 433 residues long: Xylose isomerase (433 aa).

Catalysis depends on residues H99 and D102. The Mg(2+) site is built by E230, E266, H269, D294, D305, D307, and D337.

Belongs to the xylose isomerase family. Homotetramer. The cofactor is Mg(2+).

It localises to the cytoplasm. It catalyses the reaction alpha-D-xylose = alpha-D-xylulofuranose. The polypeptide is Xylose isomerase (Cereibacter sphaeroides (strain ATCC 17029 / ATH 2.4.9) (Rhodobacter sphaeroides)).